Consider the following 289-residue polypeptide: 4-hydroxybenzoate octaprenyltransferase (289 aa).

The next 9 membrane-spanning stretches (helical) occupy residues 22–42, 45–65, 96–116, 118–138, 140–160, 164–184, 211–231, 236–256, and 267–287; these read AGWL…SHGF, WHLV…GCCI, LGLG…TNAV, IAWS…KRYV, MPQA…FAAV, VPPL…AYDT, VAGV…ALIQ, AIFM…GWLI, and AFRL…LSYW.

It belongs to the UbiA prenyltransferase family. It depends on Mg(2+) as a cofactor.

The protein resides in the cell inner membrane. The catalysed reaction is all-trans-octaprenyl diphosphate + 4-hydroxybenzoate = 4-hydroxy-3-(all-trans-octaprenyl)benzoate + diphosphate. Its pathway is cofactor biosynthesis; ubiquinone biosynthesis. Its function is as follows. Catalyzes the prenylation of para-hydroxybenzoate (PHB) with an all-trans polyprenyl group. Mediates the second step in the final reaction sequence of ubiquinone-8 (UQ-8) biosynthesis, which is the condensation of the polyisoprenoid side chain with PHB, generating the first membrane-bound Q intermediate 3-octaprenyl-4-hydroxybenzoate. This is 4-hydroxybenzoate octaprenyltransferase from Polaromonas naphthalenivorans (strain CJ2).